Reading from the N-terminus, the 238-residue chain is DNA repair protein RecO (238 aa).

The protein belongs to the RecO family.

Involved in DNA repair and RecF pathway recombination. The protein is DNA repair protein RecO of Anaplasma marginale (strain St. Maries).